Here is a 214-residue protein sequence, read N- to C-terminus: Probable nicotinate-nucleotide adenylyltransferase (214 aa).

It belongs to the NadD family.

The enzyme catalyses nicotinate beta-D-ribonucleotide + ATP + H(+) = deamido-NAD(+) + diphosphate. The protein operates within cofactor biosynthesis; NAD(+) biosynthesis; deamido-NAD(+) from nicotinate D-ribonucleotide: step 1/1. Functionally, catalyzes the reversible adenylation of nicotinate mononucleotide (NaMN) to nicotinic acid adenine dinucleotide (NaAD). This Mycobacterium bovis (strain ATCC BAA-935 / AF2122/97) protein is Probable nicotinate-nucleotide adenylyltransferase.